The primary structure comprises 87 residues: UPF0237 protein YjhC (87 aa).

Residues 4 to 76 (VVTVVGADKI…EALGVNIHVQ (73 aa)) enclose the ACT domain.

Belongs to the UPF0237 family.

This Lactococcus lactis subsp. lactis (strain IL1403) (Streptococcus lactis) protein is UPF0237 protein YjhC (yjhC).